The following is a 549-amino-acid chain: Tigger transposable element-derived protein 7 (549 aa).

The region spanning 1–52 (MNKRGKYTTLNLEEKMKVLSRIEAGRSLKSVMDEFGISKSTFYDIKKNKKLI) is the HTH psq-type domain. 2 consecutive DNA-binding regions (H-T-H motif) follow at residues 28–48 (LKSV…IKKN) and 101–132 (VELQ…FRNR). One can recognise an HTH CENPB-type domain in the interval 68 to 139 (KRKRTTGAKY…RNRHAIGNRK (72 aa)). A DDE-1 domain is found at 169-399 (LCLAQLYSGD…VKQITIANAW (231 aa)). Positions 527-549 (FLKPRPHNIKDSFSGPSTSGSNH) are disordered. Residues 540–549 (SGPSTSGSNH) are compositionally biased toward polar residues.

The protein belongs to the tigger transposable element derived protein family. Expressed in all tissues tested. Higher expression in testis and ovary.

It is found in the nucleus. The protein is Tigger transposable element-derived protein 7 (TIGD7) of Homo sapiens (Human).